The sequence spans 498 residues: Probable cytosol aminopeptidase (498 aa).

2 residues coordinate Mn(2+): K264 and D269. K276 is an active-site residue. Mn(2+)-binding residues include D287, D346, and E348. R350 is a catalytic residue.

The protein belongs to the peptidase M17 family. It depends on Mn(2+) as a cofactor.

It is found in the cytoplasm. It carries out the reaction Release of an N-terminal amino acid, Xaa-|-Yaa-, in which Xaa is preferably Leu, but may be other amino acids including Pro although not Arg or Lys, and Yaa may be Pro. Amino acid amides and methyl esters are also readily hydrolyzed, but rates on arylamides are exceedingly low.. The enzyme catalyses Release of an N-terminal amino acid, preferentially leucine, but not glutamic or aspartic acids.. Functionally, presumably involved in the processing and regular turnover of intracellular proteins. Catalyzes the removal of unsubstituted N-terminal amino acids from various peptides. This chain is Probable cytosol aminopeptidase, found in Brucella anthropi (strain ATCC 49188 / DSM 6882 / CCUG 24695 / JCM 21032 / LMG 3331 / NBRC 15819 / NCTC 12168 / Alc 37) (Ochrobactrum anthropi).